A 127-amino-acid chain; its full sequence is NADPH-dependent 7-cyano-7-deazaguanine reductase (127 aa).

The active-site Thioimide intermediate is the Cys-40. The active-site Proton donor is the Asp-47. Substrate is bound by residues 62 to 64 (VEL) and 81 to 82 (HE).

The protein belongs to the GTP cyclohydrolase I family. QueF type 1 subfamily.

The protein resides in the cytoplasm. It carries out the reaction 7-aminomethyl-7-carbaguanine + 2 NADP(+) = 7-cyano-7-deazaguanine + 2 NADPH + 3 H(+). Its pathway is tRNA modification; tRNA-queuosine biosynthesis. Functionally, catalyzes the NADPH-dependent reduction of 7-cyano-7-deazaguanine (preQ0) to 7-aminomethyl-7-deazaguanine (preQ1). The sequence is that of NADPH-dependent 7-cyano-7-deazaguanine reductase from Campylobacter jejuni subsp. jejuni serotype O:6 (strain 81116 / NCTC 11828).